An 84-amino-acid chain; its full sequence is Putative glutaredoxin MT3292 (84 aa).

Residues 1–84 (MITAALTIYT…VKAKLVKIAG (84 aa)) form the Glutaredoxin domain.

This Mycobacterium tuberculosis (strain CDC 1551 / Oshkosh) protein is Putative glutaredoxin MT3292.